Here is a 186-residue protein sequence, read N- to C-terminus: Ribosome-recycling factor (186 aa).

Belongs to the RRF family.

The protein localises to the cytoplasm. Its function is as follows. Responsible for the release of ribosomes from messenger RNA at the termination of protein biosynthesis. May increase the efficiency of translation by recycling ribosomes from one round of translation to another. The polypeptide is Ribosome-recycling factor (Burkholderia mallei (strain NCTC 10247)).